The sequence spans 695 residues: Elongation factor G (695 aa).

The region spanning 4–279 (EKVRNIGISA…AVTQYLPSPL (276 aa)) is the tr-type G domain. Residues 13–20 (AHIDSGKT), 79–83 (DTPGH), and 133–136 (NKMD) each bind GTP.

It belongs to the TRAFAC class translation factor GTPase superfamily. Classic translation factor GTPase family. EF-G/EF-2 subfamily.

The protein resides in the cytoplasm. In terms of biological role, catalyzes the GTP-dependent ribosomal translocation step during translation elongation. During this step, the ribosome changes from the pre-translocational (PRE) to the post-translocational (POST) state as the newly formed A-site-bound peptidyl-tRNA and P-site-bound deacylated tRNA move to the P and E sites, respectively. Catalyzes the coordinated movement of the two tRNA molecules, the mRNA and conformational changes in the ribosome. This Rhodopirellula baltica (strain DSM 10527 / NCIMB 13988 / SH1) protein is Elongation factor G.